Here is a 271-residue protein sequence, read N- to C-terminus: Peroxisomal biogenesis factor 2 (271 aa).

Over 1–2 (MS) the chain is Peroxisomal matrix. The helical transmembrane segment at 3 to 29 (RVAQLDSIALDKELYGQFWSEFNAAFN) threads the bilayer. The Cytoplasmic segment spans residues 30–33 (TSEH). A helical membrane pass occupies residues 34–60 (KEEWELALNTVVFMCATRFLPHYGSSC). The Peroxisomal matrix segment spans residues 61-77 (TYGSALSGVVFQCRKRT). A helical transmembrane segment spans residues 78 to 97 (LYVVTVLAGYVWKKITHIIF). The Cytoplasmic segment spans residues 98–101 (NGPH). Residues 102-133 (CGNQMMWLKLYKWVNLLYHGCDVTNFLRFLAA) traverse the membrane as a helical segment. Topologically, residues 134-175 (EGPNARAFLSPLYRAFNVHSTRLIRDGSAIASEFYSNSVFAG) are peroxisomal matrix. A helical transmembrane segment spans residues 176–197 (LEYQNRQLLWNALLELFSNTLL). At 198 to 271 (TKRGLLTFVK…SGRLTASPVY (74 aa)) the chain is on the cytoplasmic side. Positions 222, 225, 237, 238, 243, 246, 256, and 259 each coordinate Zn(2+). An RING-type zinc finger spans residues 222-259 (CPRCGGFPTNPYQIACCRANYCYVCVVKALEWSMCDAC).

Belongs to the pex2/pex10/pex12 family. As to quaternary structure, component of the PEX2-PEX10-PEX12 retrotranslocation channel, composed of PEX2, PEX10 and PEX12.

Its subcellular location is the peroxisome membrane. The enzyme catalyses [E2 ubiquitin-conjugating enzyme]-S-ubiquitinyl-L-cysteine + [acceptor protein]-L-cysteine = [E2 ubiquitin-conjugating enzyme]-L-cysteine + [acceptor protein]-S-ubiquitinyl-L-cysteine.. The protein operates within protein modification; protein ubiquitination. E3 ubiquitin-protein ligase component of a retrotranslocation channel required for peroxisome organization by mediating export of the PEX5 receptor from peroxisomes to the cytosol, thereby promoting PEX5 recycling. The retrotranslocation channel is composed of PEX2, PEX10 and PEX12; each subunit contributing transmembrane segments that coassemble into an open channel that specifically allows the passage of PEX5 through the peroxisomal membrane. PEX2 also regulates peroxisome organization by acting as a E3 ubiquitin-protein ligase. PEX2 ubiquitinates PEX5 during its passage through the retrotranslocation channel: catalyzes monoubiquitination of PEX5 at 'Cys-6', a modification that acts as a signal for PEX5 extraction into the cytosol. The protein is Peroxisomal biogenesis factor 2 of Saccharomyces cerevisiae (strain ATCC 204508 / S288c) (Baker's yeast).